A 146-amino-acid chain; its full sequence is Large ribosomal subunit protein bL19 (146 aa).

It belongs to the bacterial ribosomal protein bL19 family.

This protein is located at the 30S-50S ribosomal subunit interface and may play a role in the structure and function of the aminoacyl-tRNA binding site. This is Large ribosomal subunit protein bL19 from Bartonella bacilliformis (strain ATCC 35685 / KC583 / Herrer 020/F12,63).